A 661-amino-acid chain; its full sequence is Ecdysteroid-phosphate phosphatase (661 aa).

Residues 16-57 (KQDVSPLQILLQMGFRRQRALKALAATGNRSVQLASDWLLTH) form the UBA domain. Residues 235-300 (ANHQVYKVTQ…PAVYTRRTAE (66 aa)) form the SH3 domain. The active site involves Arg-409. The Tele-phosphohistidine intermediate role is filled by His-410. His-590 is an active-site residue.

In terms of assembly, homodimer. As to expression, detected in non-diapause eggs, with highest expression between 2 and 5 days after oviposition. Not detected in other tissues tested.

The protein localises to the cytoplasm. It is found in the cytosol. It catalyses the reaction ecdysone 22-phosphate + H2O = ecdysone + phosphate. It carries out the reaction 20-hydroxyecdysone 22-phosphate + H2O = 20-hydroxyecdysone + phosphate. The catalysed reaction is 2-deoxyecdysone 22-phosphate + H2O = 2-deoxyecdysone + phosphate. The enzyme catalyses O-phospho-L-tyrosyl-[protein] + H2O = L-tyrosyl-[protein] + phosphate. With respect to regulation, competitively inhibited by 4-nitrophenyl phosphate (para-nitrophenylphosphate, pNPP). Also inhibited by tungstate, vanadate, and phosphate. In terms of biological role, steroid phosphatase which catalyzes the conversion of inactive phosphorylated ecdysteroids into their active forms. Shows high activity towards ecdysone 22-phosphate (E22P). Has lower activity towards other ecdysteriod phosphates including 20-hydroxyecdysone 22-phosphate (20E22P) and 2-deoxyecdysone 22-phosphate (2dE22P). Also has protein tyrosine phosphatase activity. This is Ecdysteroid-phosphate phosphatase from Bombyx mori (Silk moth).